A 304-amino-acid polypeptide reads, in one-letter code: Probable HTH-type transcriptional regulator LgoR (304 aa).

The region spanning 1 to 70 is the HTH gntR-type domain; that stretch reads MSRSQNLRHN…VGNDYVIARK (70 aa). The segment at residues 31 to 50 is a DNA-binding region (H-T-H motif); the sequence is QSALAEMYNISRTTVRHILS.

Its function is as follows. May be a positive transcriptional regulator for lgoD and/or lgoT. Is essential for growth on L-galactonate as the sole carbon source. In Escherichia coli (strain K12), this protein is Probable HTH-type transcriptional regulator LgoR (lgoR).